A 293-amino-acid chain; its full sequence is Acetyl-coenzyme A carboxylase carboxyl transferase subunit beta (293 aa).

The CoA carboxyltransferase N-terminal domain occupies 29–293 (LWVKCSECSQ…GVNELVEANI (265 aa)). Zn(2+)-binding residues include C33, C36, C52, and C55. The segment at 33–55 (CSECSQVAYRKDLISNFNVCSNC) adopts a C4-type zinc-finger fold.

Belongs to the AccD/PCCB family. Acetyl-CoA carboxylase is a heterohexamer composed of biotin carboxyl carrier protein (AccB), biotin carboxylase (AccC) and two subunits each of ACCase subunit alpha (AccA) and ACCase subunit beta (AccD). Zn(2+) serves as cofactor.

The protein localises to the cytoplasm. The enzyme catalyses N(6)-carboxybiotinyl-L-lysyl-[protein] + acetyl-CoA = N(6)-biotinyl-L-lysyl-[protein] + malonyl-CoA. It functions in the pathway lipid metabolism; malonyl-CoA biosynthesis; malonyl-CoA from acetyl-CoA: step 1/1. Functionally, component of the acetyl coenzyme A carboxylase (ACC) complex. Biotin carboxylase (BC) catalyzes the carboxylation of biotin on its carrier protein (BCCP) and then the CO(2) group is transferred by the transcarboxylase to acetyl-CoA to form malonyl-CoA. This Prochlorococcus marinus (strain MIT 9215) protein is Acetyl-coenzyme A carboxylase carboxyl transferase subunit beta.